Here is a 512-residue protein sequence, read N- to C-terminus: Maturase K (512 aa).

It belongs to the intron maturase 2 family. MatK subfamily.

The protein localises to the plastid. Its subcellular location is the chloroplast. Its function is as follows. Usually encoded in the trnK tRNA gene intron. Probably assists in splicing its own and other chloroplast group II introns. This is Maturase K from Acer platanoides (Norway maple).